Reading from the N-terminus, the 267-residue chain is Cilia- and flagella-associated protein 300 (267 aa).

This sequence belongs to the CFAP300 family. As to quaternary structure, interacts with DNAAF2. In terms of tissue distribution, expressed in the left-right organiser (LRO) node at 8.25 dpc.

The protein resides in the cytoplasm. It localises to the cytoskeleton. Its subcellular location is the cilium axoneme. Its function is as follows. Cilium- and flagellum-specific protein that plays a role in axonemal structure organization and motility. May play a role in outer and inner dynein arm assembly. The sequence is that of Cilia- and flagella-associated protein 300 from Mus musculus (Mouse).